Reading from the N-terminus, the 760-residue chain is Semaphorin-4A (760 aa).

Positions 1–32 are cleaved as a signal peptide; that stretch reads MALPSLGQDSWSLLRVFFFQLFLLPSLPPASG. Residues 33 to 682 are Extracellular-facing; sequence TGGQGPMPRV…MAAQRSYWPH (650 aa). In terms of domain architecture, Sema spans 36–494; that stretch reads QGPMPRVKYH…FSGGIWRVPR (459 aa). An intrachain disulfide couples cysteine 113 to cysteine 124. Residues asparagine 120 and asparagine 135 are each glycosylated (N-linked (GlcNAc...) asparagine). Disulfide bonds link cysteine 142–cysteine 151, cysteine 269–cysteine 379, and cysteine 293–cysteine 339. Asparagine 496 carries an N-linked (GlcNAc...) asparagine glycan. The PSI domain occupies 496-547; it reads NCSVYESCVDCVLARDPHCAWDPESRLCSLLSGSTKPWKQDMERGNPEWVCT. 3 disulfide bridges follow: cysteine 497–cysteine 514, cysteine 506–cysteine 523, and cysteine 579–cysteine 623. The 59-residue stretch at 572–630 folds into the Ig-like C2-type domain; it reads NSILELPCPHLSALASYHWSHGRAKISEASATVYNGSLLLLPQDGVGGLYQCVATENGY. N-linked (GlcNAc...) asparagine glycosylation occurs at asparagine 606. A helical membrane pass occupies residues 683–703; sequence FLIVTVLLAIVLLGVLTLLLA. At 704-760 the chain is on the cytoplasmic side; the sequence is SPLGALRARGKVQGCGMLPPREKAPLSRDQHLQPSKDHRTSASDVDADNNHLGAEVA. Residues 720–760 form a disordered region; it reads MLPPREKAPLSRDQHLQPSKDHRTSASDVDADNNHLGAEVA. Residues 723-744 are compositionally biased toward basic and acidic residues; sequence PREKAPLSRDQHLQPSKDHRTS.

Belongs to the semaphorin family. Interacts with PLXNB1, PLXNB2 and PLXNB3. Interacts with PLXND1. Interacts with TIMD2. In terms of tissue distribution, expressed in neurons and glia in the developing hippocampus.

The protein resides in the cell membrane. Functionally, cell surface receptor for PLXNB1, PLXNB2, PLXNB3 and PLXND1 that plays an important role in cell-cell signaling. Regulates glutamatergic and GABAergic synapse development. Promotes the development of inhibitory synapses in a PLXNB1-dependent manner and promotes the development of excitatory synapses in a PLXNB2-dependent manner. Plays a role in priming antigen-specific T-cells, promotes differentiation of Th1 T-helper cells, and thereby contributes to adaptive immunity. Promotes phosphorylation of TIMD2. Inhibits angiogenesis. Promotes axon growth cone collapse. Inhibits axonal extension by providing local signals to specify territories inaccessible for growing axons. In Mus musculus (Mouse), this protein is Semaphorin-4A (Sema4a).